A 150-amino-acid polypeptide reads, in one-letter code: D-aminoacyl-tRNA deacylase (150 aa).

The short motif at 138 to 139 (GP) is the Gly-cisPro motif, important for rejection of L-amino acids element.

It belongs to the DTD family. Homodimer.

The protein resides in the cytoplasm. The catalysed reaction is glycyl-tRNA(Ala) + H2O = tRNA(Ala) + glycine + H(+). The enzyme catalyses a D-aminoacyl-tRNA + H2O = a tRNA + a D-alpha-amino acid + H(+). An aminoacyl-tRNA editing enzyme that deacylates mischarged D-aminoacyl-tRNAs. Also deacylates mischarged glycyl-tRNA(Ala), protecting cells against glycine mischarging by AlaRS. Acts via tRNA-based rather than protein-based catalysis; rejects L-amino acids rather than detecting D-amino acids in the active site. By recycling D-aminoacyl-tRNA to D-amino acids and free tRNA molecules, this enzyme counteracts the toxicity associated with the formation of D-aminoacyl-tRNA entities in vivo and helps enforce protein L-homochirality. The polypeptide is D-aminoacyl-tRNA deacylase (Chlorobium limicola (strain DSM 245 / NBRC 103803 / 6330)).